The sequence spans 119 residues: MWRKCLGKVVLLGCALPCVAARISVSPKLGAYGDARGGPDLWGLCIKATDAEEVSGDPDDTEMEYLPPRYAPETPLVGLDVAFRAENGFLLQLTVDAALTRLMFRGQCLAGYSFRPGGG.

To T.pallidum TP_0127, TP_0315 and TP_0619.

This is an uncharacterized protein from Treponema pallidum (strain Nichols).